The sequence spans 116 residues: Small ribosomal subunit protein bS16 (116 aa).

The protein belongs to the bacterial ribosomal protein bS16 family.

In Chlamydia trachomatis serovar L2 (strain ATCC VR-902B / DSM 19102 / 434/Bu), this protein is Small ribosomal subunit protein bS16.